The chain runs to 58 residues: Small ribosomal subunit protein bS21 (58 aa).

Belongs to the bacterial ribosomal protein bS21 family.

The chain is Small ribosomal subunit protein bS21 from Prochlorococcus marinus (strain MIT 9301).